The sequence spans 639 residues: Kininogen-1 (639 aa).

A signal peptide spans 1 to 18; it reads MKLITILLLCSRLLPSLA. Positions 28–132 constitute a Cystatin kininogen-type 1 domain; sequence CNDESLFQAV…TQICNITPGK (105 aa). Disulfide bonds link cysteine 28–cysteine 609, cysteine 83–cysteine 94, cysteine 107–cysteine 126, cysteine 142–cysteine 145, cysteine 206–cysteine 218, cysteine 229–cysteine 248, cysteine 264–cysteine 267, cysteine 328–cysteine 340, and cysteine 351–cysteine 370. Residue asparagine 82 is glycosylated (N-linked (GlcNAc...) asparagine). The region spanning 151-254 is the Cystatin kininogen-type 2 domain; that stretch reads VDSPELGPVL…SDSCEFYPGD (104 aa). Residues asparagine 169 and asparagine 205 are each glycosylated (N-linked (GlcNAc...) asparagine). The region spanning 273–376 is the Cystatin kininogen-type 3 domain; the sequence is VDSPELKEAL…TVKCKVLDMT (104 aa). N-linked (GlcNAc...) asparagine glycosylation is present at asparagine 294. Serine 332 is modified (phosphoserine). 2 disordered regions span residues 438-462 and 476-547; these read NHQG…GHGH and GYDH…LNPP. A compositionally biased stretch (basic residues) spans 482–502; the sequence is PVGHGHGQRHGHGHGHGHGRD. Over residues 503–519 the composition is skewed to basic and acidic residues; it reads KHTNKDKNNVKHTDQRR. The segment covering 522–537 has biased composition (polar residues); it reads LTSSSEDNTTSTQIQG. N-linked (GlcNAc...) asparagine glycosylation occurs at asparagine 529.

Post-translationally, bradykinin is released from kininogen by plasma kallikrein. Phosphorylated by FAM20C in the extracellular medium. In terms of processing, bradykinin is inactivated by ACE, which removes the dipeptide Arg-Phe from its C-terminus. As to expression, plasma.

It localises to the secreted. The protein resides in the extracellular space. In terms of biological role, kininogens are inhibitors of thiol proteases. HMW-kininogen plays an important role in blood coagulation by helping to position optimally prekallikrein and factor XI next to factor XII; HMW-kininogen inhibits the thrombin- and plasmin-induced aggregation of thrombocytes. LMW-kininogen inhibits the aggregation of thrombocytes. LMW-kininogen is in contrast to HMW-kininogen not involved in blood clotting. Its function is as follows. The active peptide bradykinin is a potent vasodilatator that is released from HMW-kininogen shows a variety of physiological effects: (A) influence in smooth muscle contraction, (B) induction of hypotension, (C) natriuresis and diuresis, (D) decrease in blood glucose level, (E) it is a mediator of inflammation and causes (E1) increase in vascular permeability, (E2) stimulation of nociceptors (4E3) release of other mediators of inflammation (e.g. prostaglandins), (F) it has a cardioprotective effect (directly via bradykinin action, indirectly via endothelium-derived relaxing factor action). The polypeptide is Kininogen-1 (Kng1) (Rattus norvegicus (Rat)).